A 954-amino-acid chain; its full sequence is MDLDPYASMQVGMRVVRGVDWKWGSQDSGEGNVGTVVEIGRTGSPTTPDKTVVVQWDQGNRTNYRTGFQGAYDLLLYDNAQIGVRHPNIICDCCKKHGIRGMRWKCKMCFDYDLCTQCYMNNKHDLSHAFERYETAHSQPVLVSPRQNLTRITLKGTFQGAKVVRGPDWEWGNQDGGEGKTGRVVDIRGWDVETGRSVASVTWSDGTTNVYRVGHKGKVDLKCTVEASGGFYYKEHLPKLGKPAELQRKESTDRHPFQHGDKVKCLLDIDILREMQEGHGGWNPKMAEFIGQTGTVHRITDRGDVRVQFNSETRWTFHPGALTKLNTFWVGDVVRVIDDMETVKRFQPGHGEWTDEMAPTLGHIGKVIKVYGDGDLRVSVGDQSWTFNPACLTAYQRDEEANLMTTENAKESKSTLITVLEKLLSQKTESDHAGCLVIWAALNNAAKVRELLQKYPDKVDNKNQGRTALQIASYQGHLDVVKILLQAHATVNLRDEEGDTALHYAAFGNQADVARVLMAKGAGADLLNNAKCTALYVAVSQGFTEVVQALCELNCDVNLPDSHGDTPLHYAITADYKVIIEILTEVPNIDFTVQNCQGFNLLHYSALKGNKLAIKKILARARQLVDSKKEDGFTALHLAALNNHKEVAEILIKEGRCDVNVKNNRNQTPLHLAIIQGHVGLVQLLVSEGSDVNAEDEDGDTAMHIALERQQLMSVLMEKREGEMGSSLFSKLQASGFLGNVELNVGTAIACYLAQEGADINYANHRGKSPLDLITDGRIVQIIKDFSQKFREQQVSSDCSAITCSLRRVHTTPNTMTNLSVSSVAVPTECLVCSELALLIHFFPCQHSIVCEECSRRMKKCIKCQVTITKKLKRDSTEVECSPSSESTDQRKLMEELQNRYRQMEERITCPICIDDQIKLVFQCGHGSCPDCSTALTVCPICRQAIRERIQIFV.

The region spanning 1-80 (MDLDPYASMQ…AYDLLLYDNA (80 aa)) is the MIB/HERC2 1 domain. Residues 86-138 (HPNIICDCCKKHGIRGMRWKCKMCFDYDLCTQCYMNNKHDLSHAFERYETAHS) form a ZZ-type zinc finger. Residues Cys-91, Cys-94, Cys-106, Cys-109, Cys-115, Cys-118, His-124, and His-128 each coordinate Zn(2+). The MIB/HERC2 2 domain occupies 149 to 227 (LTRITLKGTF…KVDLKCTVEA (79 aa)). ANK repeat units lie at residues 464 to 493 (QGRTALQIASYQGHLDVVKILLQAHATVNL), 497 to 526 (EGDTALHYAAFGNQADVARVLMAKGAGADL), 530 to 559 (AKCTALYVAVSQGFTEVVQALCELNCDVNL), 563 to 591 (HGDTPLHYAITADYKVIIEILTEVPNIDF), 597 to 626 (QGFNLLHYSALKGNKLAIKKILARARQLVD), 631 to 661 (DGFTALHLAALNNHKEVAEILIKEGRCDVNV), 665 to 694 (RNQTPLHLAIIQGHVGLVQLLVSEGSDVNA), 698 to 726 (DGDTAMHIALERQQLMSVLMEKREGEMGS), and 766 to 795 (RGKSPLDLITDGRIVQIIKDFSQKFREQQV). 2 RING-type zinc fingers span residues 830 to 865 (CLVCSELALLIHFFPCQHSIVCEECSRRMKKCIKCQ) and 910 to 943 (CPICIDDQIKLVFQCGHGSCPDCSTALTVCPICR).

The protein resides in the cytoplasm. The catalysed reaction is S-ubiquitinyl-[E2 ubiquitin-conjugating enzyme]-L-cysteine + [acceptor protein]-L-lysine = [E2 ubiquitin-conjugating enzyme]-L-cysteine + N(6)-ubiquitinyl-[acceptor protein]-L-lysine.. It participates in protein modification; protein ubiquitination. E3 ubiquitin-protein ligase that mediates ubiquitination of Delta receptors, which act as ligands of Notch proteins. Positively regulates the Delta-mediated Notch signaling by ubiquitinating the intracellular domain of Delta, leading to endocytosis of Delta receptors. This is E3 ubiquitin-protein ligase MIB2 (MIB2) from Gallus gallus (Chicken).